The following is a 351-amino-acid chain: GTPase Obg (351 aa).

One can recognise an Obg domain in the interval 1–159; the sequence is MKFLDQCKIY…RWVWLRLKLI (159 aa). The OBG-type G domain occupies 160-327; it reads ADAGLVGLPN…MLFELLRHIR (168 aa). GTP is bound by residues 166–173, 191–195, 212–215, 279–282, and 308–310; these read GLPNAGKS, FTTLT, DIPG, NKID, and SGA. Mg(2+)-binding residues include Ser173 and Thr193.

The protein belongs to the TRAFAC class OBG-HflX-like GTPase superfamily. OBG GTPase family. As to quaternary structure, monomer. The cofactor is Mg(2+).

It localises to the cytoplasm. Its function is as follows. An essential GTPase which binds GTP, GDP and possibly (p)ppGpp with moderate affinity, with high nucleotide exchange rates and a fairly low GTP hydrolysis rate. Plays a role in control of the cell cycle, stress response, ribosome biogenesis and in those bacteria that undergo differentiation, in morphogenesis control. This Rhodospirillum centenum (strain ATCC 51521 / SW) protein is GTPase Obg.